Reading from the N-terminus, the 356-residue chain is Alanine racemase (356 aa).

Catalysis depends on lysine 35, which acts as the Proton acceptor; specific for D-alanine. Position 35 is an N6-(pyridoxal phosphate)lysine (lysine 35). Arginine 130 contributes to the substrate binding site. The active-site Proton acceptor; specific for L-alanine is tyrosine 253. Methionine 301 contacts substrate.

It belongs to the alanine racemase family. Requires pyridoxal 5'-phosphate as cofactor.

The enzyme catalyses L-alanine = D-alanine. It functions in the pathway amino-acid biosynthesis; D-alanine biosynthesis; D-alanine from L-alanine: step 1/1. In terms of biological role, catalyzes the interconversion of L-alanine and D-alanine. May also act on other amino acids. The sequence is that of Alanine racemase (alr) from Erwinia tasmaniensis (strain DSM 17950 / CFBP 7177 / CIP 109463 / NCPPB 4357 / Et1/99).